We begin with the raw amino-acid sequence, 185 residues long: Large ribosomal subunit protein uL5 (185 aa).

Belongs to the universal ribosomal protein uL5 family. Part of the 50S ribosomal subunit; part of the 5S rRNA/L5/L18/L25 subcomplex. Contacts the 5S rRNA and the P site tRNA. Forms a bridge to the 30S subunit in the 70S ribosome.

This is one of the proteins that bind and probably mediate the attachment of the 5S RNA into the large ribosomal subunit, where it forms part of the central protuberance. In the 70S ribosome it contacts protein S13 of the 30S subunit (bridge B1b), connecting the 2 subunits; this bridge is implicated in subunit movement. Contacts the P site tRNA; the 5S rRNA and some of its associated proteins might help stabilize positioning of ribosome-bound tRNAs. In Afipia carboxidovorans (strain ATCC 49405 / DSM 1227 / KCTC 32145 / OM5) (Oligotropha carboxidovorans), this protein is Large ribosomal subunit protein uL5.